A 499-amino-acid chain; its full sequence is Lysine--tRNA ligase (499 aa).

Mg(2+) contacts are provided by Glu408 and Glu415.

It belongs to the class-II aminoacyl-tRNA synthetase family. As to quaternary structure, homodimer. The cofactor is Mg(2+).

Its subcellular location is the cytoplasm. It catalyses the reaction tRNA(Lys) + L-lysine + ATP = L-lysyl-tRNA(Lys) + AMP + diphosphate. The sequence is that of Lysine--tRNA ligase from Bacillus cereus (strain G9842).